We begin with the raw amino-acid sequence, 216 residues long: MNFDIARKRMVETQIISRGVKDRRLIEAMLKVPRHVFVEEAMAAQAYSDTPLPIGEKQTISQPYMVALMTELLELSGREKVLEIGTGSGYQAAILATLADRVYTVERIRPLALKARRALDRLGLLNVNIKISDGTIGWEEEAPFDAIIVTAGAPDVPDKLAEQLAVGGRLVIPVGNQFDQVLVRITKQEDGSLIRENVTGCRFVKLVGKYGWGTEE.

The active site involves serine 61.

It belongs to the methyltransferase superfamily. L-isoaspartyl/D-aspartyl protein methyltransferase family.

The protein resides in the cytoplasm. The catalysed reaction is [protein]-L-isoaspartate + S-adenosyl-L-methionine = [protein]-L-isoaspartate alpha-methyl ester + S-adenosyl-L-homocysteine. Catalyzes the methyl esterification of L-isoaspartyl residues in peptides and proteins that result from spontaneous decomposition of normal L-aspartyl and L-asparaginyl residues. It plays a role in the repair and/or degradation of damaged proteins. In Geobacter metallireducens (strain ATCC 53774 / DSM 7210 / GS-15), this protein is Protein-L-isoaspartate O-methyltransferase.